Consider the following 259-residue polypeptide: Heat-labile enterotoxin IIA, A chain (259 aa).

The first 18 residues, 1 to 18, serve as a signal peptide directing secretion; it reads MIKHVLLFFVFISFSVSA. Position 23-37 (23-37) interacts with NAD(+); it reads RADSRTPDEIRRAGG. The active site involves glutamate 128. Cysteines 203 and 215 form a disulfide.

Belongs to the enterotoxin A family. As to quaternary structure, heterohexamer of one A chain and of five B chains.

Its function is as follows. The biological activity of the toxin is produced by the A chain, which activates intracellular adenyl cyclase. In Escherichia coli, this protein is Heat-labile enterotoxin IIA, A chain.